The sequence spans 654 residues: Hepatocyte growth factor activator serine proteases (654 aa).

An N-terminal signal peptide occupies residues 1–33 (MGRWAWGPSLCPLPGMALLLLLLLLLVPHGAQP). The interval 34 to 100 (QAGGNLTEPP…SSSPGDPVLT (67 aa)) is disordered. Positions 34–370 (QAGGNLTEPP…RLAACESLAR (337 aa)) are cleaved as a propeptide — removed in mature form. 2 N-linked (GlcNAc...) asparagine glycosylation sites follow: Asn38 and Asn46. Positions 57-81 (PVTSVTPVTPATSAPEAQGPRGRGL) are enriched in low complexity. The region spanning 101 to 148 (VDGQPCRFPFRYGGRMLHACTSEGSAHRKWCATTHNYDRDRAWGYCVQ) is the Fibronectin type-II domain. 19 disulfide bridges follow: Cys106–Cys131, Cys120–Cys146, Cys162–Cys173, Cys167–Cys184, Cys186–Cys195, Cys200–Cys228, Cys226–Cys235, Cys243–Cys254, Cys248–Cys265, Cys267–Cys276, Cys284–Cys365, Cys305–Cys347, Cys336–Cys360, Cys393–Cys520, Cys431–Cys447, Cys439–Cys509, Cys534–Cys603, Cys566–Cys582, and Cys593–Cys621. In terms of domain architecture, EGF-like 1 spans 158–196 (ALDSCASSPCLNGGSCSHTQDPGSYHCTCPMAFTGRNCD). Residues 198-238 (EKCFDETRYEHLEAGDRWARVSQGQVEQCECAGGQIRCEGT) enclose the Fibronectin type-I domain. The region spanning 239–277 (RHTACLSSPCLNGGTCHLIVATGTTVCSCPPGHAGRLCN) is the EGF-like 2 domain. Positions 283–365 (RCFVGNGTEY…SWEYCRLAAC (83 aa)) constitute a Kringle domain. N-linked (GlcNAc...) asparagine glycosylation occurs at Asn288. The Peptidase S1 domain maps to 407-645 (IIGGSSSLPG…YVDWIKDRIW (239 aa)). The Charge relay system role is filled by His446. 2 N-linked (GlcNAc...) asparagine glycosylation sites follow: Asn467 and Asn491. The active-site Charge relay system is Asp496. Asn545 carries an N-linked (GlcNAc...) asparagine glycan. The Charge relay system role is filled by Ser597.

It belongs to the peptidase S1 family. Heterodimer of a short chain and a long chain linked by a disulfide bond. The active form of HGFAC presents in the serum is derived from the COOH-terminal region of the precursor by the cleavage of bonds between Arg-370 and Ile-371 and Arg-406 and Ile-407. Liver.

The protein resides in the secreted. In terms of biological role, serine protease that hydrolyzes the inactive zymogen hepatocyte growth factor (HGFsc) to an activated disulfide-linked heterodimer, then initiating hepatocyte growth factor receptor signaling pathway. This Canis lupus familiaris (Dog) protein is Hepatocyte growth factor activator serine proteases (HGFAC).